A 197-amino-acid polypeptide reads, in one-letter code: Imidazoleglycerol-phosphate dehydratase (197 aa).

Belongs to the imidazoleglycerol-phosphate dehydratase family.

The protein localises to the cytoplasm. It carries out the reaction D-erythro-1-(imidazol-4-yl)glycerol 3-phosphate = 3-(imidazol-4-yl)-2-oxopropyl phosphate + H2O. Its pathway is amino-acid biosynthesis; L-histidine biosynthesis; L-histidine from 5-phospho-alpha-D-ribose 1-diphosphate: step 6/9. This is Imidazoleglycerol-phosphate dehydratase from Pseudomonas fluorescens (strain Pf0-1).